A 132-amino-acid polypeptide reads, in one-letter code: Small ribosomal subunit protein uS8 (132 aa).

This sequence belongs to the universal ribosomal protein uS8 family. As to quaternary structure, part of the 30S ribosomal subunit. Contacts proteins S5 and S12.

Functionally, one of the primary rRNA binding proteins, it binds directly to 16S rRNA central domain where it helps coordinate assembly of the platform of the 30S subunit. The chain is Small ribosomal subunit protein uS8 from Mycolicibacterium smegmatis (strain ATCC 700084 / mc(2)155) (Mycobacterium smegmatis).